The following is a 689-amino-acid chain: Ribonuclease J (689 aa).

Residues 1–88 (MTDNNQNNEN…RNYAQEELDS (88 aa)) form a disordered region. The span at 9–24 (ENHENSSENSKADEMR) shows a compositional bias: basic and acidic residues. A compositionally biased stretch (basic residues) spans 56-78 (HHKKEHRPNKKPNNHHKQKHAKT). 2 positions are modified to N6-acetyllysine: K132 and K138. Zn(2+)-binding residues include H206, H208, D210, H211, H275, and D297. K321, K335, and K395 each carry N6-acetyllysine. A substrate-binding site is contributed by 498–502 (HVSGH). K509 carries the post-translational modification N6-acetyllysine. H524 is a binding site for Zn(2+). N6-acetyllysine occurs at positions 545, 632, and 647.

This sequence belongs to the metallo-beta-lactamase superfamily. RNA-metabolizing metallo-beta-lactamase-like family. Bacterial RNase J subfamily. Homodimer. Homotetramer; dimer of homodimers. Interacts with RNA helicase RhpA, might be a member of a minimal RNA degradosome complex. Zn(2+) is required as a cofactor. Acetylated on nine lysine residues. Some of the residues are acetylated by multiple different mechanisms. RimL is partially responsible for the acetylation of Lys-321, Lys-395 and Lys-647. HPB8_1270 homolog is partially responsible for the acetylation of Lys-321, Lys-395, Lys-509 and Lys-647. Acetyl-phosphate-mediated non-enzymatic acetylation pathway takes part in the acetylation of Lys-132, Lys-321, Lys-395, Lys-509 and Lys-647. Acetylation of the remaining residues Lys-138, Lys-335, Lys-545 and Lys-632 occurs by a yet undetermined mechanism. Acetylation on a number of these residues is important for growth regulation and proper cell morphology.

The protein localises to the cytoplasm. Its activity is regulated as follows. Catalytic activity is regulated by the balance between homodimers and homotetramers, with homotetramers being the active forms of this enzyme. Acetylation allosterically regulates the homooligomerization state and hence the catalytic activity. Functionally, an RNase that has 5'-3' exoribonuclease and endoribonuclease activity. Degrades 5'-monophosphorylated ssRNA and dsRNA, considerably more active on ssRNA. Association with RhpA significantly increases the dsRNase activity. Degrades RNA substrate with hairpin structures at both ends with low activity, but presence of RhpA significantly increases the activity on this substrate. Stimulates ATPase activity of RNA helicase RhpA. Involved in stabilization of mRNA but apparently not rRNA. This chain is Ribonuclease J, found in Helicobacter pylori (strain ATCC 700392 / 26695) (Campylobacter pylori).